Here is a 586-residue protein sequence, read N- to C-terminus: CTP synthase 2 (586 aa).

In terms of domain architecture, Glutamine amidotransferase type-1 spans 300-554 (SIALVGKYTK…LAATGTLNTH (255 aa)). Catalysis depends on for GATase activity residues C399, H526, and E528. A phosphoserine mark is found at S568, S571, and S574.

Belongs to the CTP synthase family.

It carries out the reaction UTP + L-glutamine + ATP + H2O = CTP + L-glutamate + ADP + phosphate + 2 H(+). Its pathway is pyrimidine metabolism; CTP biosynthesis via de novo pathway; CTP from UDP: step 2/2. Catalyzes the ATP-dependent amination of UTP to CTP with either L-glutamine or ammonia as the source of nitrogen. Constitutes the rate-limiting enzyme in the synthesis of cytosine nucleotides. The polypeptide is CTP synthase 2 (Ctps2) (Rattus norvegicus (Rat)).